The primary structure comprises 358 residues: Extracellular phospholipase C (358 aa).

The protein resides in the secreted. This chain is Extracellular phospholipase C (plcA), found in Dickeya chrysanthemi (Pectobacterium chrysanthemi).